A 231-amino-acid chain; its full sequence is 7-cyano-7-deazaguanine synthase (231 aa).

8-18 (FSGGQDSTTCL) contributes to the ATP binding site. Residues Cys-188, Cys-197, Cys-200, and Cys-203 each coordinate Zn(2+).

It belongs to the QueC family. Zn(2+) is required as a cofactor.

The enzyme catalyses 7-carboxy-7-deazaguanine + NH4(+) + ATP = 7-cyano-7-deazaguanine + ADP + phosphate + H2O + H(+). Its pathway is purine metabolism; 7-cyano-7-deazaguanine biosynthesis. In terms of biological role, catalyzes the ATP-dependent conversion of 7-carboxy-7-deazaguanine (CDG) to 7-cyano-7-deazaguanine (preQ(0)). This is 7-cyano-7-deazaguanine synthase from Shigella flexneri serotype 5b (strain 8401).